Consider the following 330-residue polypeptide: Aspartate--ammonia ligase (330 aa).

Belongs to the class-II aminoacyl-tRNA synthetase family. AsnA subfamily.

It localises to the cytoplasm. It carries out the reaction L-aspartate + NH4(+) + ATP = L-asparagine + AMP + diphosphate + H(+). It functions in the pathway amino-acid biosynthesis; L-asparagine biosynthesis; L-asparagine from L-aspartate (ammonia route): step 1/1. The sequence is that of Aspartate--ammonia ligase from Haemophilus influenzae (strain 86-028NP).